We begin with the raw amino-acid sequence, 331 residues long: MRKVTIFIIIIVALTGFGSVRIKDIADFRGARDNQLFGIGVVVGLNGTGDSGQVNSTLLANMAKAFNVSIDSDSLKTKNSALVMVFADIPPFYKEGMRLDVSVASIGDAKSLEGGFLVQTPLYGADGNVYAVAQGNVSVGGFDVKVSANLQNKYRIVGYIPNGAIVEKEIPFEFVQSNSVTILLKKPDFTTSARVAQAINTTFERKIAKAVDASSIKIEVPSAFEDDIVTFLSLVEEVEVSVDQPARVVVNEKTGTVVFGGNVKILDFTLSYGVFNITVKNGKVESSEEVDATVSSLVSALKNLGATPQDIIAILQTMHSAGVLLADLVVM.

A signal peptide spans 1–22 (MRKVTIFIIIIVALTGFGSVRI).

This sequence belongs to the FlgI family. The basal body constitutes a major portion of the flagellar organelle and consists of four rings (L,P,S, and M) mounted on a central rod.

The protein resides in the periplasm. It localises to the bacterial flagellum basal body. Assembles around the rod to form the L-ring and probably protects the motor/basal body from shearing forces during rotation. The polypeptide is Flagellar P-ring protein (Pseudothermotoga lettingae (strain ATCC BAA-301 / DSM 14385 / NBRC 107922 / TMO) (Thermotoga lettingae)).